The sequence spans 496 residues: Glutamyl-tRNA(Gln) amidotransferase subunit A (496 aa).

Active-site charge relay system residues include Lys-75 and Ser-150. The Acyl-ester intermediate role is filled by Ser-174.

This sequence belongs to the amidase family. GatA subfamily. As to quaternary structure, heterotrimer of A, B and C subunits.

It catalyses the reaction L-glutamyl-tRNA(Gln) + L-glutamine + ATP + H2O = L-glutaminyl-tRNA(Gln) + L-glutamate + ADP + phosphate + H(+). Functionally, allows the formation of correctly charged Gln-tRNA(Gln) through the transamidation of misacylated Glu-tRNA(Gln) in organisms which lack glutaminyl-tRNA synthetase. The reaction takes place in the presence of glutamine and ATP through an activated gamma-phospho-Glu-tRNA(Gln). The chain is Glutamyl-tRNA(Gln) amidotransferase subunit A from Burkholderia pseudomallei (strain 668).